We begin with the raw amino-acid sequence, 294 residues long: Segregation and condensation protein A (294 aa).

The protein belongs to the ScpA family. Component of a cohesin-like complex composed of ScpA, ScpB and the Smc homodimer, in which ScpA and ScpB bind to the head domain of Smc. The presence of the three proteins is required for the association of the complex with DNA.

The protein resides in the cytoplasm. Its function is as follows. Participates in chromosomal partition during cell division. May act via the formation of a condensin-like complex containing Smc and ScpB that pull DNA away from mid-cell into both cell halves. This chain is Segregation and condensation protein A, found in Ureaplasma parvum serovar 3 (strain ATCC 700970).